The primary structure comprises 395 residues: uncharacterized protein (395 aa).

The tract at residues 115-144 is disordered; the sequence is TKPPTEGGPEKDQSSPSQTQAAPQGPSTAS. A compositionally biased stretch (low complexity) spans 128–141; it reads SSPSQTQAAPQGPS.

This is an uncharacterized protein from Homo sapiens (Human).